The following is a 75-amino-acid chain: Sec-independent protein translocase protein TatA (75 aa).

Residues 1–21 (MFGLSPAQLIILLVVILLIFG) form a helical membrane-spanning segment.

This sequence belongs to the TatA/E family. As to quaternary structure, the Tat system comprises two distinct complexes: a TatABC complex, containing multiple copies of TatA, TatB and TatC subunits, and a separate TatA complex, containing only TatA subunits. Substrates initially bind to the TatABC complex, which probably triggers association of the separate TatA complex to form the active translocon.

Its subcellular location is the cell inner membrane. Functionally, part of the twin-arginine translocation (Tat) system that transports large folded proteins containing a characteristic twin-arginine motif in their signal peptide across membranes. TatA could form the protein-conducting channel of the Tat system. In Haemophilus influenzae (strain PittEE), this protein is Sec-independent protein translocase protein TatA.